A 64-amino-acid chain; its full sequence is Putative neurotoxin-H (64 aa).

The signal sequence occupies residues 1 to 19 (MYATVTVTVLLLISSGIFC). 3 cysteine pairs are disulfide-bonded: cysteine 25-cysteine 45, cysteine 32-cysteine 54, and cysteine 36-cysteine 56.

As to expression, expressed by the venom gland.

The protein resides in the secreted. This chain is Putative neurotoxin-H, found in Lychas mucronatus (Chinese swimming scorpion).